A 364-amino-acid polypeptide reads, in one-letter code: Coproporphyrin III ferrochelatase (364 aa).

2 residues coordinate Fe-coproporphyrin III: arginine 29 and tyrosine 118. Fe(2+)-binding residues include histidine 169 and glutamate 250.

The protein belongs to the ferrochelatase family.

The protein localises to the cytoplasm. The catalysed reaction is Fe-coproporphyrin III + 2 H(+) = coproporphyrin III + Fe(2+). It participates in porphyrin-containing compound metabolism; protoheme biosynthesis. Functionally, involved in coproporphyrin-dependent heme b biosynthesis. Catalyzes the insertion of ferrous iron into coproporphyrin III to form Fe-coproporphyrin III. This Streptococcus pneumoniae (strain Hungary19A-6) protein is Coproporphyrin III ferrochelatase.